Consider the following 313-residue polypeptide: Ribosomal RNA small subunit methyltransferase H (313 aa).

S-adenosyl-L-methionine contacts are provided by residues 35–37, aspartate 55, phenylalanine 80, aspartate 102, and glutamine 109; that span reads GGH.

The protein belongs to the methyltransferase superfamily. RsmH family.

The protein localises to the cytoplasm. It catalyses the reaction cytidine(1402) in 16S rRNA + S-adenosyl-L-methionine = N(4)-methylcytidine(1402) in 16S rRNA + S-adenosyl-L-homocysteine + H(+). Specifically methylates the N4 position of cytidine in position 1402 (C1402) of 16S rRNA. The protein is Ribosomal RNA small subunit methyltransferase H of Shewanella denitrificans (strain OS217 / ATCC BAA-1090 / DSM 15013).